The primary structure comprises 236 residues: Cytochrome b-c1 complex subunit Rieske-4, mitochondrial (236 aa).

The N-terminal 24 residues, 1-24, are a transit peptide targeting the mitochondrion; it reads MINFGSCWGLASVTSNSFSIISGF. Residues 25–73 are Mitochondrial matrix-facing; the sequence is SSNSVSHAHDMGLVPDLPPTVAAIKNPTSKIVYDEHNHERYPPGDPSKR. Residues 74 to 96 traverse the membrane as a helical segment; that stretch reads AFAYFVLTGGRFVYASLVRLLIL. Over 97-236 the chain is Mitochondrial intermembrane; it reads KFVLSMSASK…FLEENKLLIG (140 aa). Positions 146–234 constitute a Rieske domain; that stretch reads INLANSVDLG…YSFLEENKLL (89 aa). [2Fe-2S] cluster contacts are provided by C179, H181, C198, and H201. Residues C184 and C200 are joined by a disulfide bond.

Belongs to the Rieske iron-sulfur protein family. Component of the ubiquinol-cytochrome c oxidoreductase (cytochrome b-c1 complex, complex III, CIII), a multisubunit enzyme composed of 3 respiratory subunits cytochrome b, cytochrome c1 and Rieske protein, 2 core protein subunits, and several low-molecular weight protein subunits. The complex exists as an obligatory dimer and forms supercomplexes (SCs) in the inner mitochondrial membrane with cytochrome c oxidase (complex IV, CIV). [2Fe-2S] cluster is required as a cofactor.

It is found in the mitochondrion inner membrane. It carries out the reaction a quinol + 2 Fe(III)-[cytochrome c](out) = a quinone + 2 Fe(II)-[cytochrome c](out) + 2 H(+)(out). Functionally, component of the ubiquinol-cytochrome c oxidoreductase, a multisubunit transmembrane complex that is part of the mitochondrial electron transport chain which drives oxidative phosphorylation. The respiratory chain contains 3 multisubunit complexes succinate dehydrogenase (complex II, CII), ubiquinol-cytochrome c oxidoreductase (cytochrome b-c1 complex, complex III, CIII) and cytochrome c oxidase (complex IV, CIV), that cooperate to transfer electrons derived from NADH and succinate to molecular oxygen, creating an electrochemical gradient over the inner membrane that drives transmembrane transport and the ATP synthase. The cytochrome b-c1 complex catalyzes electron transfer from ubiquinol to cytochrome c, linking this redox reaction to translocation of protons across the mitochondrial inner membrane, with protons being carried across the membrane as hydrogens on the quinol. In the process called Q cycle, 2 protons are consumed from the matrix, 4 protons are released into the intermembrane space and 2 electrons are passed to cytochrome c. The Rieske protein is a catalytic core subunit containing a [2Fe-2S] iron-sulfur cluster. It cycles between 2 conformational states during catalysis to transfer electrons from the quinol bound in the Q(0) site in cytochrome b to cytochrome c1. The sequence is that of Cytochrome b-c1 complex subunit Rieske-4, mitochondrial from Nicotiana tabacum (Common tobacco).